The sequence spans 1120 residues: Mechanosensitive channel MscK (1120 aa).

The signal sequence occupies residues 1–33; the sequence is MTMFQYYKRSRHFVFSAFIAFVFVLLCQNTAFA. At 34–499 the chain is on the periplasmic side; the sequence is RASSNGDLPT…MKITVNWQKA (466 aa). 3 coiled-coil regions span residues 43 to 98, 126 to 266, and 360 to 422; these read TKAD…VAEA, STLS…TLTE, and DELE…RREL. Residues 500 to 520 form a helical membrane-spanning segment; the sequence is WPAVFIAFLAGLPLLLIAGLI. The Cytoplasmic segment spans residues 521 to 560; the sequence is HWRLGWLKAYQQKLASAVGSLRNDSQLNTPKAILIDLIRA. A helical membrane pass occupies residues 561-581; the sequence is LPVCLIILAVGLILLTMQLNI. Position 582 (serine 582) is a topological domain, periplasmic. Residues 583-603 form a helical membrane-spanning segment; sequence ELLWSFSKKLAIFWLVFGLCW. Topologically, residues 604–634 are cytoplasmic; that stretch reads KVLEKNGVAVRHFGMPEQQTSHWRRQIVRIS. Residues 635–655 traverse the membrane as a helical segment; it reads LALLPIHFWSVVAELSPLHLM. Residues 656–657 lie on the Periplasmic side of the membrane; it reads DD. A helical transmembrane segment spans residues 658-678; the sequence is VLGQAMIFFNLLLIAFLVWPM. The Cytoplasmic portion of the chain corresponds to 679 to 692; sequence CRESWRDKESHTMR. The chain crosses the membrane as a helical span at residues 693-713; it reads LVTITVLSIIPIALMVLTATG. At 714-728 the chain is on the periplasmic side; it reads YFYTTLRLAGRWIET. A helical transmembrane segment spans residues 729–749; it reads VYLVIIWNLLYQTVLRGLSVA. The Cytoplasmic portion of the chain corresponds to 750–796; that stretch reads ARRIAWRRALARRQNLVKEGAEGAEPPEEPTIALEQVNQQTLRITML. The chain crosses the membrane as a helical span at residues 797-817; the sequence is LMFALFGVMFWAIWSDLITVF. Topologically, residues 818–839 are periplasmic; that stretch reads SYLDSITLWHYNGTEAGAAVVK. Residues 840 to 860 traverse the membrane as a helical segment; the sequence is NVTMGSLLFAIIASMVAWALI. At 861–886 the chain is on the cytoplasmic side; the sequence is RNLPGLLEVLVLSRLNMRQGASYAIT. A helical transmembrane segment spans residues 887–907; sequence TILNYIIIAVGAMTVFGSLGV. The Periplasmic segment spans residues 908 to 921; sequence SWDKLQWLAAALSV. Residues 922–942 form a helical membrane-spanning segment; sequence GLGFGLQEIFGNFVSGLIILF. The Cytoplasmic segment spans residues 943 to 1120; the sequence is ERPVRIGDTV…KGDDPTPAVG (178 aa). A coiled-coil region spans residues 1057–1081; sequence YVRELRDRSRTVDELNRTIDQLCRE.

The protein belongs to the MscS (TC 1.A.23) family.

The protein resides in the cell inner membrane. Functionally, mechanosensitive channel that opens in response to membrane tension and specific ionic conditions. Requires high concentrations of external K(+), NH(4)(+), Rb(+) or Cs(+) to gate. May participate in the regulation of osmotic pressure changes within the cell, although it does not appear to have a major role in osmolarity regulation. Forms an ion channel of 1.0 nanosiemens conductance. The channel can remain active for between 30 seconds and over 3 minutes; it does not desensitize upon extended pressure. Its activity is masked in wild-type cells by the MscS channel. The protein is Mechanosensitive channel MscK (mscK) of Escherichia coli (strain K12).